A 263-amino-acid chain; its full sequence is uncharacterized protein (263 aa).

Belongs to the A.longa ORF167/ORF288 family.

It is found in the plastid. This is an uncharacterized protein from Euglena longa (Euglenophycean alga).